The following is a 299-amino-acid chain: Single myb histone 1 (299 aa).

Residues 1–61 enclose the HTH myb-type domain; sequence MGAPKQRWTP…KWRNLSVTAG (61 aa). The segment at residues 28–57 is a DNA-binding region (H-T-H motif); the sequence is WRTILRDSDFSALLRLRSNVDLKDKWRNLS. Residues 124–192 enclose the H15 domain; the sequence is SVARLDDLIL…KVNQKYRIAP (69 aa). Residues 238-279 are a coiled coil; the sequence is EEAAAFAAKAVAEAEVAIAEAEEAARVAEAAENDAEAAKAFL.

It belongs to the histone H1/H5 family. SMH subfamily. In terms of assembly, forms a homodimer and heterodimers. Expressed in leaves.

Its subcellular location is the nucleus. It is found in the chromosome. The protein resides in the nucleolus. The protein localises to the telomere. Functionally, binds preferentially double-stranded telomeric repeats 5'-TTTAGGG-3', but can also bind to the single G-rich and C-rich telomeric strand. This Zea mays (Maize) protein is Single myb histone 1 (SMH1).